Consider the following 948-residue polypeptide: ELKS/Rab6-interacting/CAST family member 1 (948 aa).

The segment at methionine 1–leucine 54 is disordered. N6-acetyllysine is present on lysine 10. Over residues proline 13 to proline 28 the composition is skewed to low complexity. Phosphoserine occurs at positions 17, 21, and 37. Phosphothreonine is present on threonine 38. A compositionally biased stretch (gly residues) spans glycine 40–glycine 51. Serine 55, serine 75, serine 94, serine 796, and serine 937 each carry phosphoserine. Residues arginine 144–glutamate 920 adopt a coiled-coil conformation. Residues lysine 773–serine 796 are compositionally biased toward basic and acidic residues. Disordered stretches follow at residues lysine 773 to serine 801 and glutamine 903 to alanine 948. Over residues aspartate 939–alanine 948 the composition is skewed to acidic residues.

As to quaternary structure, interacts with the GTB-bound forms of RAB6A isoform 1 and isoform 2 and with RAB6B. The interaction was strongest with RAB6B, followed by RAB6A isoform 2 and weakest with RAB6A isoform 1. Part of a complex with CHUK, IKBKB and IKBKG. Interacts with CHUK, IKBKB and IKBKG. The interaction with IKBKG is independent of CHUK and IKBKB. Interacts with NFKBIA. Isoform 1 interacts through its C-terminus with the PDZ domains of RIMS1 and RIMS2. Interacts with ERC2/CAST1. Interacts with SDCCAG8. Part of a cortical microtubule stabilization complex (CMSC) composed of KANK1, PPFIA1, PPFIBP1, ERC1/ELKS, PHLDB2/LL5beta, CLASPs, KIF21A and possibly additional interactors; within CMSCs KANK1 and PHLDB2/LL5beta appear to be the core components for targeting of microtubule-binding proteins KIF21A and CLASPs, whereas PPFIA1, PPFIBP1 and ERC1/ELKS serve as scaffolds for protein clustering. Isoform 1 is specifically expressed in brain. A further probable isoform is widely expressed outside of brain It is referred to as ERC1a by PubMed:12391317 and characterized by a C-terminus identical to that of isoforms 1 in human and mouse.

The protein resides in the cytoplasm. It localises to the cytoskeleton. It is found in the microtubule organizing center. The protein localises to the centrosome. Its subcellular location is the membrane. The protein resides in the golgi apparatus membrane. It localises to the presynaptic active zone. It is found in the cell projection. The protein localises to the podosome. In terms of biological role, regulatory subunit of the IKK complex. Probably recruits IkappaBalpha/NFKBIA to the complex. May be involved in the organization of the cytomatrix at the nerve terminals active zone (CAZ) which regulates neurotransmitter release. May be involved in vesicle trafficking at the CAZ. May be involved in Rab-6 regulated endosomes to Golgi transport. In Rattus norvegicus (Rat), this protein is ELKS/Rab6-interacting/CAST family member 1 (Erc1).